A 133-amino-acid polypeptide reads, in one-letter code: Endoribonuclease YbeY (133 aa).

Zn(2+) contacts are provided by His-105, His-109, and His-115.

It belongs to the endoribonuclease YbeY family. The cofactor is Zn(2+).

The protein localises to the cytoplasm. Single strand-specific metallo-endoribonuclease involved in late-stage 70S ribosome quality control and in maturation of the 3' terminus of the 16S rRNA. In Lawsonia intracellularis (strain PHE/MN1-00), this protein is Endoribonuclease YbeY.